The following is a 382-amino-acid chain: ATP phosphoribosyltransferase regulatory subunit (382 aa).

The protein belongs to the class-II aminoacyl-tRNA synthetase family. HisZ subfamily. As to quaternary structure, heteromultimer composed of HisG and HisZ subunits.

The protein localises to the cytoplasm. The protein operates within amino-acid biosynthesis; L-histidine biosynthesis; L-histidine from 5-phospho-alpha-D-ribose 1-diphosphate: step 1/9. Functionally, required for the first step of histidine biosynthesis. May allow the feedback regulation of ATP phosphoribosyltransferase activity by histidine. This Albidiferax ferrireducens (strain ATCC BAA-621 / DSM 15236 / T118) (Rhodoferax ferrireducens) protein is ATP phosphoribosyltransferase regulatory subunit.